A 381-amino-acid chain; its full sequence is Arrestin homolog (381 aa).

Belongs to the arrestin family.

The protein is Arrestin homolog of Heliothis virescens (Tobacco budworm moth).